The chain runs to 198 residues: Thymidine kinase (198 aa).

Residues Gly16–Ser23 and Glu89–Gln92 each bind ATP. The active-site Proton acceptor is the Glu90. Residues Cys146, Cys149, Cys184, and Cys187 each contribute to the Zn(2+) site.

This sequence belongs to the thymidine kinase family. In terms of assembly, homotetramer.

It localises to the cytoplasm. The catalysed reaction is thymidine + ATP = dTMP + ADP + H(+). This is Thymidine kinase from Dictyoglomus thermophilum (strain ATCC 35947 / DSM 3960 / H-6-12).